A 956-amino-acid chain; its full sequence is Plasma membrane ATPase 1 (956 aa).

Over 1–65 (MAEKPEVLDA…EKKESKFLKF (65 aa)) the chain is Cytoplasmic. Residues 66–85 (LGFMWNPLSWVMEAAAIMAI) traverse the membrane as a helical segment. The Extracellular segment spans residues 86–97 (ALANGGGKPPDW). The chain crosses the membrane as a helical span at residues 98–118 (QDFVGIITLLIINSTISFIEE). The Cytoplasmic portion of the chain corresponds to 119–247 (NNAGNAAAAL…GHFQKVLTAI (129 aa)). The helical transmembrane segment at 248–268 (GNFCICSIAVGMIIEIIVMYP) threads the bilayer. Topologically, residues 269 to 277 (IQHRKYRPG) are extracellular. Residues 278-295 (IDNLLVLLIGGIPIAMPT) traverse the membrane as a helical segment. Residues 296–646 (VLSVTMAIGS…LTSRAIFQRM (351 aa)) are Cytoplasmic-facing. Asp-333 serves as the catalytic 4-aspartylphosphate intermediate. Mg(2+) contacts are provided by Asp-592 and Asp-596. A helical transmembrane segment spans residues 647–666 (KNYTIYAVSITIRIVLGFML). Residues 667-674 (LALIWKFD) are Extracellular-facing. Residues 675–697 (FPPFMVLIIAILNDGTIMTISKD) traverse the membrane as a helical segment. At 698 to 713 (RVKPSPLPDSWKLAEI) the chain is on the cytoplasmic side. Residues 714–734 (FTTGVVLGGYLAMMTVIFFWA) form a helical membrane-spanning segment. Topologically, residues 735-759 (AYKTNFFPRIFGVSTLEKTATDDFR) are extracellular. Residues 760–780 (KLASAIYLQVSTISQALIFVT) form a helical membrane-spanning segment. The Cytoplasmic portion of the chain corresponds to 781-792 (RSRSWSFVERPG). The helical transmembrane segment at 793–813 (LLLVFAFFVAQLVATLIAVYA) threads the bilayer. Residues 814 to 821 (NWSFAAIE) lie on the Extracellular side of the membrane. A helical transmembrane segment spans residues 822–842 (GIGWGWAGVIWLYNIVTYIPL). Over 843–956 (DLIKFLIRYA…IETIQQSYTV (114 aa)) the chain is Cytoplasmic.

The protein belongs to the cation transport ATPase (P-type) (TC 3.A.3) family. Type IIIA subfamily. Possibly exists as a homodimer or a homotrimer.

It is found in the cell membrane. The catalysed reaction is ATP + H2O + H(+)(in) = ADP + phosphate + 2 H(+)(out). In terms of biological role, the plasma membrane ATPase of plants and fungi is a hydrogen ion pump. The proton gradient it generates drives the active transport of nutrients by H(+)-symport. The resulting external acidification and/or internal alkinization may mediate growth responses. The sequence is that of Plasma membrane ATPase 1 (LHA1) from Solanum lycopersicum (Tomato).